The following is a 156-amino-acid chain: Succinate dehydrogenase assembly factor 2-B, mitochondrial (156 aa).

A mitochondrion-targeting transit peptide spans 1–24; it reads MLRQLIVSTVGRRMPLQMISQSRL.

Belongs to the SDHAF2 family. As to quaternary structure, interacts with the flavoprotein subunit within the SDH catalytic dimer.

The protein resides in the mitochondrion matrix. Functionally, plays an essential role in the assembly of succinate dehydrogenase (SDH), an enzyme complex (also referred to as respiratory complex II) that is a component of both the tricarboxylic acid (TCA) cycle and the mitochondrial electron transport chain, and which couples the oxidation of succinate to fumarate with the reduction of ubiquinone (coenzyme Q) to ubiquinol. Required for flavinylation (covalent attachment of FAD) of the flavoprotein subunit of the SDH catalytic dimer. This chain is Succinate dehydrogenase assembly factor 2-B, mitochondrial, found in Drosophila erecta (Fruit fly).